Here is a 134-residue protein sequence, read N- to C-terminus: Cytochrome b5 (134 aa).

The Cytochrome b5 heme-binding domain occupies 5–81 (KKVLGFEEVS…MEKYYIGEID (77 aa)). Heme-binding residues include His-40 and His-64. Residues 107–127 (FMIKILQFLVPILILGLALVV) form a helical membrane-spanning segment.

It belongs to the cytochrome b5 family.

It is found in the endoplasmic reticulum membrane. Its subcellular location is the microsome membrane. Membrane bound hemoprotein which function as an electron carrier for several membrane bound oxygenases. This is Cytochrome b5 (CYB5) from Brassica oleracea var. botrytis (Cauliflower).